A 115-amino-acid chain; its full sequence is Protein Rev (115 aa).

Residues serine 5 and serine 8 each carry the phosphoserine; by host CK2 modification. The segment at 18–26 (LIKFLYQSN) is homomultimerization. The disordered stretch occupies residues 23–48 (YQSNPPPSSEGTRQARRNRRRRWRER). The Nuclear localization signal and RNA-binding (RRE) signature appears at 34–50 (TRQARRNRRRRWRERQR). The span at 36–48 (QARRNRRRRWRER) shows a compositional bias: basic residues. A Nuclear export signal and binding to XPO1 motif is present at residues 73–83 (LQLPPQRLTLD). The segment at 89–115 (GTSGTQGVGSPQILVESPTVLESGTKE) is disordered. Phosphoserine; by host occurs at positions 91 and 98.

This sequence belongs to the HIV-1 REV protein family. In terms of assembly, homomultimer; when bound to the RRE. Multimeric assembly is essential for activity and may involve XPO1. Binds to human KPNB1, XPO1, TNPO1, RANBP5 and IPO7. Interacts with the viral Integrase. Interacts with human KHDRBS1. Interacts with human NAP1; this interaction decreases Rev multimerization and stimulates its activity. Interacts with human DEAD-box helicases DDX3 and DDX24; these interactions may serve for viral RNA export to the cytoplasm and packaging, respectively. Interacts with human PSIP1; this interaction may inhibit HIV-1 DNA integration by promoting dissociation of the Integrase-LEDGF/p75 complex. Asymmetrically arginine dimethylated at one site by host PRMT6. Methylation impairs the RNA-binding activity and export of viral RNA from the nucleus to the cytoplasm. Post-translationally, phosphorylated by protein kinase CK2. Presence of, and maybe binding to the N-terminus of the regulatory beta subunit of CK2 is necessary for CK2-mediated Rev's phosphorylation.

The protein localises to the host nucleus. It is found in the host nucleolus. The protein resides in the host cytoplasm. Functionally, escorts unspliced or incompletely spliced viral pre-mRNAs (late transcripts) out of the nucleus of infected cells. These pre-mRNAs carry a recognition sequence called Rev responsive element (RRE) located in the env gene, that is not present in fully spliced viral mRNAs (early transcripts). This function is essential since most viral proteins are translated from unspliced or partially spliced pre-mRNAs which cannot exit the nucleus by the pathway used by fully processed cellular mRNAs. Rev itself is translated from a fully spliced mRNA that readily exits the nucleus. Rev's nuclear localization signal (NLS) binds directly to KPNB1/Importin beta-1 without previous binding to KPNA1/Importin alpha-1. KPNB1 binds to the GDP bound form of RAN (Ran-GDP) and targets Rev to the nucleus. In the nucleus, the conversion from Ran-GDP to Ran-GTP dissociates Rev from KPNB1 and allows Rev's binding to the RRE in viral pre-mRNAs. Rev multimerization on the RRE via cooperative assembly exposes its nuclear export signal (NES) to the surface. Rev can then form a complex with XPO1/CRM1 and Ran-GTP, leading to nuclear export of the complex. Conversion from Ran-GTP to Ran-GDP mediates dissociation of the Rev/RRE/XPO1/RAN complex, so that Rev can return to the nucleus for a subsequent round of export. Beside KPNB1, also seems to interact with TNPO1/Transportin-1, RANBP5/IPO5 and IPO7/RANBP7 for nuclear import. The nucleoporin-like HRB/RIP is an essential cofactor that probably indirectly interacts with Rev to release HIV RNAs from the perinuclear region to the cytoplasm. In Human immunodeficiency virus type 1 group M subtype B (isolate MN) (HIV-1), this protein is Protein Rev.